Consider the following 374-residue polypeptide: uncharacterized protein (374 aa).

The N-terminal stretch at 1 to 23 (MDSKWFFIVLISFLLVLPSIVTP) is a signal peptide. The tract at residues 66–374 (SSSSSSSSSS…SSSSSSSGEN (309 aa)) is disordered.

The protein resides in the secreted. This is an uncharacterized protein from Dictyostelium discoideum (Social amoeba).